Consider the following 271-residue polypeptide: Large ribosomal subunit protein uL2 (271 aa).

The segment at 221 to 271 is disordered; it reads RGVAMNPVDHPMGGGEGKSSGGHPRNRNGIPSNGFKTRNKKKITNKYIIKK. Basic residues predominate over residues 257–271; the sequence is TRNKKKITNKYIIKK.

Belongs to the universal ribosomal protein uL2 family. Part of the 50S ribosomal subunit. Forms a bridge to the 30S subunit in the 70S ribosome.

Functionally, one of the primary rRNA binding proteins. Required for association of the 30S and 50S subunits to form the 70S ribosome, for tRNA binding and peptide bond formation. It has been suggested to have peptidyltransferase activity; this is somewhat controversial. Makes several contacts with the 16S rRNA in the 70S ribosome. This Karelsulcia muelleri (strain GWSS) (Sulcia muelleri) protein is Large ribosomal subunit protein uL2.